Here is a 2022-residue protein sequence, read N- to C-terminus: Transient receptor potential cation channel subfamily M member 6 (2022 aa).

The Cytoplasmic segment spans residues 1 to 741; that stretch reads MKEQPVLERL…MWMGRLKMRK (741 aa). A helical membrane pass occupies residues 742-762; that stretch reads NSWLKIIISIILPPTILTLEF. Residues 763–841 are Extracellular-facing; it reads KSKAEMSHVP…YEFYSAPIVK (79 aa). Residues 842 to 862 traverse the membrane as a helical segment; it reads FWFYTMAYLAFLMLFTYTVLV. The Cytoplasmic portion of the chain corresponds to 863 to 905; it reads EMQPQPSVQEWLVSIYIFTNAIEVVREICISEPGKFTQKVKVW. A helical membrane pass occupies residues 906-926; the sequence is ISEYWNLTETVAIGLFSAGFV. At 927–939 the chain is on the extracellular side; it reads LRWGDPPFHTAGR. The chain crosses the membrane as a helical span at residues 940–960; sequence LIYCIDIIFWFSRLLDFFAVN. Topologically, residues 961-972 are cytoplasmic; sequence QHAGPYVTMIAK. Residues 973–993 form a helical membrane-spanning segment; the sequence is MTANMFYIVIIMAIVLLSFGV. At 994–1012 the chain is on the extracellular side; it reads ARKAILSPKEPPSWSLARD. The segment at residues 1013–1033 is an intramembrane region (pore-forming); the sequence is IVFEPYWMIYGEVYAGEIDVC. Residues 1034–1047 are Extracellular-facing; it reads SSQPSCPPGSFLTP. Residues 1048–1068 form a helical membrane-spanning segment; sequence FLQAVYLFVQYIIMVNLLIAF. The Cytoplasmic portion of the chain corresponds to 1069-2022; the sequence is FNNVYLDMES…RNSPEDDMQL (954 aa). The tract at residues 1479–1516 is disordered; it reads TCDSDSSRSEQHQKQAQDSSLSDNSTRSAQSSECSEVG. Positions 1483–1493 are enriched in basic and acidic residues; that stretch reads DSSRSEQHQKQ. Residues 1494–1512 show a composition bias toward polar residues; it reads AQDSSLSDNSTRSAQSSEC. The Alpha-type protein kinase domain occupies 1750–1980; sequence NLDKSMSSWS…CCRKLKLPDL (231 aa). Residues G1777, G1778, L1779, R1780, and K1804 each contribute to the ADP site. T1851 carries the phosphothreonine; by autocatalysis modification. E1876 and M1879 together coordinate ADP. H1909 serves as a coordination point for Zn(2+). Catalysis depends on D1923, which acts as the Proton acceptor. D1933 contacts ADP. Zn(2+)-binding residues include H1966, C1968, and C1972. Positions 1997-2022 are disordered; that stretch reads EIKIESAEEPPARETGRNSPEDDMQL. Basic and acidic residues predominate over residues 1998–2016; that stretch reads IKIESAEEPPARETGRNSP.

In the C-terminal section; belongs to the protein kinase superfamily. Alpha-type protein kinase family. ALPK subfamily. This sequence in the N-terminal section; belongs to the transient receptor (TC 1.A.4) family. LTrpC subfamily. TRPM6 sub-subfamily. Homomers. Forms heteromers with TRPM7; TRPM6 increases the current amplitude of TRPM6/7 heteromers as compared to TRPM7 homomer. Interacts (via kinase domain) with RACK1. Post-translationally, autophosphorylated; autophosphorylation controlls the protein kinase activity of TRPM6 towards their substrates. Autophosphorylation of Thr-1851 in the kinase domain is essential for the inhibitory effect of RACK1. The C-terminus of TRPM6 is proteolytically cleaved in vivo, in a cell type-specific fashion, releasing the kinase module from the transmembrane domain. The cleaved kinase fragments are translocated to the nucleus to phosphorylate histones and regulate gene expression. In terms of tissue distribution, highly expressed in kidney and colon. Isoform TRPM6a and isoform TRPM6b, are coexpressed with TRPM7 in kidney, and testis, and are also found in several cell lines of lung origin. Isoform TRPM6c is detected only in testis and in NCI-H510A small cell lung carcinoma cells.

The protein resides in the cell membrane. It is found in the apical cell membrane. It localises to the nucleus. The enzyme catalyses L-seryl-[protein] + ATP = O-phospho-L-seryl-[protein] + ADP + H(+). It carries out the reaction L-threonyl-[protein] + ATP = O-phospho-L-threonyl-[protein] + ADP + H(+). It catalyses the reaction Mg(2+)(in) = Mg(2+)(out). The catalysed reaction is Ca(2+)(in) = Ca(2+)(out). The enzyme catalyses Zn(2+)(in) = Zn(2+)(out). With respect to regulation, strongly inhibited by intracellular Mg(2+); unlikely to be active at physiological levels of intracellular Mg(2+). In the heteromeric TRPM6-TRPM7 channels complexes, TRPM7 are able to offset the very high sensitivity of TRPM6 to cytosolic Mg(2+) to physiologically relevant concentrations, whereas TRPM6 relieve TRPM7 from the inhibitory action of Mg-ATP. Consequently, the association of TRPM6 with TRPM7 allow for high constitutive activity of TRPM6/7 in the presence of physiological levels of Mg(2+) and Mg-ATP. The kinase activity is controlled through the autophosphorylation of a serine/threonine-rich region located to the N-terminal of the catalytic domain. Bifunctional protein that combines an ion channel with an intrinsic kinase domain, enabling it to modulate cellular functions either by conducting ions through the pore or by phosphorylating downstream proteins via its kinase domain. Crucial for Mg(2+) homeostasis. Has an important role in epithelial Mg(2+) transport and in the active Mg(2+) absorption in the gut and kidney. However, whether TRPM6 forms functional homomeric channels by itself or functions primarily as a subunit of heteromeric TRPM6-TRPM7 channels, is still under debate. In terms of biological role, the C-terminal kinase domain can be cleaved from the channel segment in a cell-type-specific fashion. The cleaved kinase fragments can translocate to the nucleus, and bind chromatin-remodeling complex proteins to ultimately phosphorylate specific Ser/Thr residues of histones known to be functionally important for cell differentiation and development. The chain is Transient receptor potential cation channel subfamily M member 6 (TRPM6) from Homo sapiens (Human).